A 364-amino-acid chain; its full sequence is Phosphoserine aminotransferase (364 aa).

Position 41 (Arg41) interacts with L-glutamate. Residues 75–76 (AS), Trp100, Thr155, and Gln198 each bind pyridoxal 5'-phosphate. Lys199 is subject to N6-(pyridoxal phosphate)lysine. 239–240 (NT) contacts pyridoxal 5'-phosphate.

This sequence belongs to the class-V pyridoxal-phosphate-dependent aminotransferase family. SerC subfamily. Homodimer. Pyridoxal 5'-phosphate serves as cofactor.

The protein localises to the cytoplasm. It catalyses the reaction O-phospho-L-serine + 2-oxoglutarate = 3-phosphooxypyruvate + L-glutamate. It carries out the reaction 4-(phosphooxy)-L-threonine + 2-oxoglutarate = (R)-3-hydroxy-2-oxo-4-phosphooxybutanoate + L-glutamate. It functions in the pathway amino-acid biosynthesis; L-serine biosynthesis; L-serine from 3-phospho-D-glycerate: step 2/3. Its function is as follows. Catalyzes the reversible conversion of 3-phosphohydroxypyruvate to phosphoserine and of 3-hydroxy-2-oxo-4-phosphonooxybutanoate to phosphohydroxythreonine. The protein is Phosphoserine aminotransferase of Streptococcus thermophilus (strain ATCC BAA-250 / LMG 18311).